The sequence spans 600 residues: Elongation factor 4 (600 aa).

The region spanning 4–186 (SKIRNFSIIA…AIVDKIPPPS (183 aa)) is the tr-type G domain. Residues 16–21 (DHGKST) and 133–136 (NKID) each bind GTP.

The protein belongs to the TRAFAC class translation factor GTPase superfamily. Classic translation factor GTPase family. LepA subfamily.

The protein localises to the cell membrane. The enzyme catalyses GTP + H2O = GDP + phosphate + H(+). Functionally, required for accurate and efficient protein synthesis under certain stress conditions. May act as a fidelity factor of the translation reaction, by catalyzing a one-codon backward translocation of tRNAs on improperly translocated ribosomes. Back-translocation proceeds from a post-translocation (POST) complex to a pre-translocation (PRE) complex, thus giving elongation factor G a second chance to translocate the tRNAs correctly. Binds to ribosomes in a GTP-dependent manner. The protein is Elongation factor 4 of Mycoplasma capricolum subsp. capricolum (strain California kid / ATCC 27343 / NCTC 10154).